The chain runs to 207 residues: Peptidyl-tRNA hydrolase (207 aa).

TRNA is bound at residue Y14. H19 serves as the catalytic Proton acceptor. The tRNA site is built by F68, N70, and N116.

This sequence belongs to the PTH family. Monomer.

The protein localises to the cytoplasm. It catalyses the reaction an N-acyl-L-alpha-aminoacyl-tRNA + H2O = an N-acyl-L-amino acid + a tRNA + H(+). Its function is as follows. Hydrolyzes ribosome-free peptidyl-tRNAs (with 1 or more amino acids incorporated), which drop off the ribosome during protein synthesis, or as a result of ribosome stalling. In terms of biological role, catalyzes the release of premature peptidyl moieties from peptidyl-tRNA molecules trapped in stalled 50S ribosomal subunits, and thus maintains levels of free tRNAs and 50S ribosomes. This is Peptidyl-tRNA hydrolase from Hyphomonas neptunium (strain ATCC 15444).